The sequence spans 236 residues: Purine nucleoside phosphorylase DeoD-type (236 aa).

His-4 provides a ligand contact to a purine D-ribonucleoside. Phosphate is bound by residues Gly-20, Arg-24, Arg-43, and Arg-87–Thr-90. Residues Glu-179–Glu-181 and Ser-203–Asp-204 each bind a purine D-ribonucleoside. The active-site Proton donor is Asp-204.

Belongs to the PNP/UDP phosphorylase family. As to quaternary structure, homohexamer; trimer of homodimers.

It carries out the reaction a purine D-ribonucleoside + phosphate = a purine nucleobase + alpha-D-ribose 1-phosphate. The catalysed reaction is a purine 2'-deoxy-D-ribonucleoside + phosphate = a purine nucleobase + 2-deoxy-alpha-D-ribose 1-phosphate. In terms of biological role, catalyzes the reversible phosphorolytic breakdown of the N-glycosidic bond in the beta-(deoxy)ribonucleoside molecules, with the formation of the corresponding free purine bases and pentose-1-phosphate. The protein is Purine nucleoside phosphorylase DeoD-type of Streptococcus pneumoniae (strain JJA).